The primary structure comprises 307 residues: 4-hydroxythreonine-4-phosphate dehydrogenase (307 aa).

2 residues coordinate substrate: H121 and T122. H150, H189, and H246 together coordinate a divalent metal cation. Residues K254, N263, and R272 each coordinate substrate.

It belongs to the PdxA family. Homodimer. It depends on Zn(2+) as a cofactor. Requires Mg(2+) as cofactor. The cofactor is Co(2+).

The protein resides in the cytoplasm. It catalyses the reaction 4-(phosphooxy)-L-threonine + NAD(+) = 3-amino-2-oxopropyl phosphate + CO2 + NADH. It functions in the pathway cofactor biosynthesis; pyridoxine 5'-phosphate biosynthesis; pyridoxine 5'-phosphate from D-erythrose 4-phosphate: step 4/5. Catalyzes the NAD(P)-dependent oxidation of 4-(phosphooxy)-L-threonine (HTP) into 2-amino-3-oxo-4-(phosphooxy)butyric acid which spontaneously decarboxylates to form 3-amino-2-oxopropyl phosphate (AHAP). In Campylobacter fetus subsp. fetus (strain 82-40), this protein is 4-hydroxythreonine-4-phosphate dehydrogenase.